The chain runs to 234 residues: uncharacterized protein (234 aa).

Positions 5-234 constitute an ABC transporter domain; it reads MELVDVWKIY…ERRGVVYGDT (230 aa). 41-48 provides a ligand contact to ATP; it reads GPSGSGKS.

This sequence belongs to the ABC transporter superfamily.

This is an uncharacterized protein from Thermotoga maritima (strain ATCC 43589 / DSM 3109 / JCM 10099 / NBRC 100826 / MSB8).